Consider the following 446-residue polypeptide: Probable D-serine dehydratase (446 aa).

At K116 the chain carries N6-(pyridoxal phosphate)lysine.

Belongs to the serine/threonine dehydratase family. DsdA subfamily. The cofactor is pyridoxal 5'-phosphate.

It catalyses the reaction D-serine = pyruvate + NH4(+). In Bacillus thuringiensis (strain Al Hakam), this protein is Probable D-serine dehydratase.